Reading from the N-terminus, the 556-residue chain is Formate--tetrahydrofolate ligase (556 aa).

65-72 (TPAGEGKT) provides a ligand contact to ATP.

This sequence belongs to the formate--tetrahydrofolate ligase family.

It catalyses the reaction (6S)-5,6,7,8-tetrahydrofolate + formate + ATP = (6R)-10-formyltetrahydrofolate + ADP + phosphate. It participates in one-carbon metabolism; tetrahydrofolate interconversion. This is Formate--tetrahydrofolate ligase from Clostridium cylindrosporum.